The following is a 101-amino-acid chain: NAD(P)H-quinone oxidoreductase subunit 4L, chloroplastic (101 aa).

3 helical membrane passes run 2–22 (MLEHVLVLSAYLFSIGIYGLI), 32–52 (MCLELILNAVNINFVTFSDFF), and 61–81 (IFSIFVIAIAAAEAAIGSAIV).

The protein belongs to the complex I subunit 4L family. As to quaternary structure, NDH is composed of at least 16 different subunits, 5 of which are encoded in the nucleus.

It is found in the plastid. The protein resides in the chloroplast thylakoid membrane. The enzyme catalyses a plastoquinone + NADH + (n+1) H(+)(in) = a plastoquinol + NAD(+) + n H(+)(out). It carries out the reaction a plastoquinone + NADPH + (n+1) H(+)(in) = a plastoquinol + NADP(+) + n H(+)(out). NDH shuttles electrons from NAD(P)H:plastoquinone, via FMN and iron-sulfur (Fe-S) centers, to quinones in the photosynthetic chain and possibly in a chloroplast respiratory chain. The immediate electron acceptor for the enzyme in this species is believed to be plastoquinone. Couples the redox reaction to proton translocation, and thus conserves the redox energy in a proton gradient. This is NAD(P)H-quinone oxidoreductase subunit 4L, chloroplastic from Citrus sinensis (Sweet orange).